We begin with the raw amino-acid sequence, 338 residues long: Fructose-1,6-bisphosphatase class 1 1 (338 aa).

Positions 91, 113, 115, and 116 each coordinate Mg(2+). Residues 116 to 119 (DGSS), Asn208, and Lys274 contribute to the substrate site. Glu280 serves as a coordination point for Mg(2+).

This sequence belongs to the FBPase class 1 family. As to quaternary structure, homotetramer. The cofactor is Mg(2+).

It localises to the cytoplasm. It catalyses the reaction beta-D-fructose 1,6-bisphosphate + H2O = beta-D-fructose 6-phosphate + phosphate. Its pathway is carbohydrate biosynthesis; gluconeogenesis. The chain is Fructose-1,6-bisphosphatase class 1 1 from Cupriavidus metallidurans (strain ATCC 43123 / DSM 2839 / NBRC 102507 / CH34) (Ralstonia metallidurans).